A 455-amino-acid polypeptide reads, in one-letter code: Acetylcholinesterase collagenic tail peptide (455 aa).

Positions 1 to 22 are cleaved as a signal peptide; that stretch reads MVVLNPMTLGIYLQLFFLSIVS. A PRAD region spans residues 51-67; the sequence is CCLLTPPPPPLFPPPFF. Positions 90–282 are disordered; that stretch reads QSPCMQGSLG…QLIMGPKGER (193 aa). 2 Collagen-like domains span residues 96 to 269 and 277 to 291; these read GSLG…PGPP and GPKG…PGRC. The span at 101-112 shows a compositional bias: pro residues; the sequence is PGPPGPQGPPGL. A compositionally biased stretch (basic and acidic residues) spans 118 to 127; the sequence is PKGEKGELGR. A heparan sulfate proteoglycan binding region spans residues 130–133; sequence RKGR. Over residues 134–152 the composition is skewed to pro residues; the sequence is PGPPGVPGMPGPIGWPGPE. The segment covering 182 to 200 has biased composition (basic and acidic residues); the sequence is RGEKGSRGEKGDLGPKGEK. The tract at residues 235 to 238 is heparan sulfate proteoglycan binding; it reads KRGK. Positions 262–271 are enriched in pro residues; sequence RPGPPGPPPA.

It belongs to the COLQ family. Homotrimer. Component of the asymmetric form of AChE, a disulfide-bonded oligomer composed of the collagenic subunits (Q) and a variable number of asymmetric catalytic subunits (T). The N-terminal of a collagenic subunit (Q) associates with the C-terminal of a catalytic subunit (T). Post-translationally, the triple-helical tail is stabilized by disulfide bonds at each end. In terms of tissue distribution, found at the end plate of skeletal muscle.

It localises to the synapse. In terms of biological role, anchors the catalytic subunits of asymmetric AChE to the synaptic basal lamina. The polypeptide is Acetylcholinesterase collagenic tail peptide (COLQ) (Homo sapiens (Human)).